Consider the following 1225-residue polypeptide: DNA-directed RNA polymerase subunit beta' (1225 aa).

Residues Cys-60, Cys-62, Cys-75, and Cys-78 each coordinate Zn(2+). Asp-450, Asp-452, and Asp-454 together coordinate Mg(2+). Zn(2+)-binding residues include Cys-818, Cys-892, Cys-899, and Cys-902.

Belongs to the RNA polymerase beta' chain family. In terms of assembly, the RNAP catalytic core consists of 2 alpha, 1 beta, 1 beta' and 1 omega subunit. When a sigma factor is associated with the core the holoenzyme is formed, which can initiate transcription. The cofactor is Mg(2+). Requires Zn(2+) as cofactor.

It carries out the reaction RNA(n) + a ribonucleoside 5'-triphosphate = RNA(n+1) + diphosphate. Functionally, DNA-dependent RNA polymerase catalyzes the transcription of DNA into RNA using the four ribonucleoside triphosphates as substrates. The polypeptide is DNA-directed RNA polymerase subunit beta' (Streptococcus pneumoniae serotype 19F (strain G54)).